The primary structure comprises 350 residues: Phosphotriesterase-related protein (350 aa).

A divalent metal cation is bound by residues histidine 22, histidine 24, glutamate 169, histidine 201, histidine 230, and aspartate 298.

The protein belongs to the metallo-dependent hydrolases superfamily. Phosphotriesterase family. A divalent metal cation is required as a cofactor.

In Drosophila pseudoobscura pseudoobscura (Fruit fly), this protein is Phosphotriesterase-related protein.